The sequence spans 262 residues: Snake venom serine protease (262 aa).

The N-terminal stretch at 1-18 is a signal peptide; that stretch reads MVLIRVLANLLILQLSYA. Residues 19-24 constitute a propeptide that is removed on maturation; sequence QKSSEL. Positions 25–253 constitute a Peptidase S1 domain; sequence VIGGDECNIN…YTEWIQSIIA (229 aa). Intrachain disulfides connect Cys-31–Cys-167, Cys-50–Cys-66, Cys-102–Cys-260, Cys-146–Cys-214, Cys-178–Cys-193, and Cys-204–Cys-229. Catalysis depends on charge relay system residues His-65 and Asp-114. N-linked (GlcNAc...) asparagine glycosylation is found at Asn-125 and Asn-158. Ser-208 acts as the Charge relay system in catalysis.

It belongs to the peptidase S1 family. Snake venom subfamily. As to quaternary structure, monomer. In terms of tissue distribution, expressed by the venom gland.

Its subcellular location is the secreted. Its function is as follows. Snake venom serine protease that may act in the hemostasis system of the prey. The protein is Snake venom serine protease of Crotalus durissus durissus (Central American rattlesnake).